The sequence spans 531 residues: Cytochrome c oxidase subunit 1 (531 aa).

A helical membrane pass occupies residues 18–38 (ILYLIYGMVSAMVATGMSVII). Positions 41 and 46 each coordinate Ca(2+). Transmembrane regions (helical) follow at residues 59–79 (VLVTGHAIAMIFLFVMPILIG), 103–123 (ISFWCLPPALVCVIASVLIET), 149–169 (AIFAIHLTSISSLLGAINFIV), 185–205 (PLFVWAIFFTAILLLLSLPVL), 237–257 (LFYFFGHPEVYIIIIPGFGII), and 269–289 (IFGQIGMIYAIGSIGLLGFLV). Histidine 64 contributes to the Fe(II)-heme a binding site. Histidine 243 is a Cu cation binding site. Residues 243 to 247 (HPEVY) constitute a cross-link (1'-histidyl-3'-tyrosine (His-Tyr)). Tyrosine 247 provides a ligand contact to O2. Cu cation is bound by residues histidine 292 and histidine 293. 2 helical membrane passes run 312–332 (MVIAIPTGIKIFSWLATLYGG) and 340–360 (MLFALGFLFLFTIGGLTGVML). The Mg(2+) site is built by histidine 370 and aspartate 371. Histidine 378 is a binding site for heme a3. Histidine 380 lines the Fe(II)-heme a pocket. The next 2 helical transmembrane spans lie at 385–405 (MGALFSLIAGYYYWGPAMFGL) and 414–434 (VHYWLLFVSVNIIFLPMHFLG). Proline 443 contributes to the Ca(2+) binding site. The chain crosses the membrane as a helical span at residues 458 to 478 (WGSIMSVISVLIGLYSVLVQL).

It belongs to the heme-copper respiratory oxidase family. Component of the cytochrome c oxidase (complex IV, CIV), a multisubunit enzyme composed of a catalytic core of 3 subunits and several supernumerary subunits. The complex exists as a monomer or a dimer and forms supercomplexes (SCs) in the inner mitochondrial membrane with ubiquinol-cytochrome c oxidoreductase (cytochrome b-c1 complex, complex III, CIII). Heme is required as a cofactor. Cu cation serves as cofactor.

The protein localises to the mitochondrion inner membrane. The catalysed reaction is 4 Fe(II)-[cytochrome c] + O2 + 8 H(+)(in) = 4 Fe(III)-[cytochrome c] + 2 H2O + 4 H(+)(out). The protein operates within energy metabolism; oxidative phosphorylation. In terms of biological role, component of the cytochrome c oxidase, the last enzyme in the mitochondrial electron transport chain which drives oxidative phosphorylation. The respiratory chain contains 3 multisubunit complexes succinate dehydrogenase (complex II, CII), ubiquinol-cytochrome c oxidoreductase (cytochrome b-c1 complex, complex III, CIII) and cytochrome c oxidase (complex IV, CIV), that cooperate to transfer electrons derived from NADH and succinate to molecular oxygen, creating an electrochemical gradient over the inner membrane that drives transmembrane transport and the ATP synthase. Cytochrome c oxidase is the component of the respiratory chain that catalyzes the reduction of oxygen to water. Electrons originating from reduced cytochrome c in the intermembrane space (IMS) are transferred via the dinuclear copper A center (CU(A)) of subunit 2 and heme A of subunit 1 to the active site in subunit 1, a binuclear center (BNC) formed by heme A3 and copper B (CU(B)). The BNC reduces molecular oxygen to 2 water molecules using 4 electrons from cytochrome c in the IMS and 4 protons from the mitochondrial matrix. In Candida albicans (strain SC5314 / ATCC MYA-2876) (Yeast), this protein is Cytochrome c oxidase subunit 1 (COX1).